Reading from the N-terminus, the 157-residue chain is XylDLEGF operon transcriptional activator 2 (157 aa).

The region spanning 39 to 140 (ERVVQFIEEN…GELPSDTLSL (102 aa)) is the HTH araC/xylS-type domain. DNA-binding regions (H-T-H motif) lie at residues 56-77 (EQLAELALMSPRSLYTMFEKHT) and 107-130 (ITEVALDYGFLHLGRFAEKYRSTF).

The protein resides in the cytoplasm. Functionally, regulatory protein of the TOL plasmid xyl operons. XylS activates the xylXYZLTEGFJQKIH operon required for the degradation of toluene, m-xylene and p-xylene. The protein is XylDLEGF operon transcriptional activator 2 (xylS2) of Pseudomonas putida (Arthrobacter siderocapsulatus).